The primary structure comprises 100 residues: Urease subunit gamma (100 aa).

It belongs to the urease gamma subunit family. Heterotrimer of UreA (gamma), UreB (beta) and UreC (alpha) subunits. Three heterotrimers associate to form the active enzyme.

It localises to the cytoplasm. The enzyme catalyses urea + 2 H2O + H(+) = hydrogencarbonate + 2 NH4(+). Its pathway is nitrogen metabolism; urea degradation; CO(2) and NH(3) from urea (urease route): step 1/1. The sequence is that of Urease subunit gamma from Methylibium petroleiphilum (strain ATCC BAA-1232 / LMG 22953 / PM1).